Reading from the N-terminus, the 524-residue chain is Glucose-6-phosphate isomerase (524 aa).

The active-site Proton donor is the E346. Residues H377 and K492 contribute to the active site.

The protein belongs to the GPI family.

It localises to the cytoplasm. It carries out the reaction alpha-D-glucose 6-phosphate = beta-D-fructose 6-phosphate. The protein operates within carbohydrate biosynthesis; gluconeogenesis. It functions in the pathway carbohydrate degradation; glycolysis; D-glyceraldehyde 3-phosphate and glycerone phosphate from D-glucose: step 2/4. Its function is as follows. Catalyzes the reversible isomerization of glucose-6-phosphate to fructose-6-phosphate. The polypeptide is Glucose-6-phosphate isomerase (Chlamydia trachomatis serovar A (strain ATCC VR-571B / DSM 19440 / HAR-13)).